The primary structure comprises 326 residues: Polycomb complex protein BMI-1-A (326 aa).

The RING-type zinc-finger motif lies at 18-57 (CVLCGGYFIDATTIIECLHSFCKTCIVRYLETSKYCPICD). The Nuclear localization signal signature appears at 81–95 (KLVPGLFKGEMKRRR). Disordered regions lie at residues 239-262 (NPHTDRINHTSGDMESDSGSDKAG) and 274-326 (CIPS…ISSG). Positions 290–303 (ISSTINGTSSSSSS) are enriched in low complexity.

In terms of assembly, component of a PRC1-like complex. Interacts with cbx4.

Its subcellular location is the nucleus. Functionally, component of a Polycomb group (PcG) multiprotein PRC1-like complex, a complex class required to maintain the transcriptionally repressive state of many genes, including Hox genes, throughout development. PcG PRC1 complex acts via chromatin remodeling and modification of histones; it mediates monoubiquitination of histone H2A 'Lys-119', rendering chromatin heritably changed in its expressibility. In the PRC1 complex, it is required to stimulate the E3 ubiquitin-protein ligase activity of rnf2. This Xenopus laevis (African clawed frog) protein is Polycomb complex protein BMI-1-A (bmi1a).